A 234-amino-acid chain; its full sequence is Phosphoribosylaminoimidazole-succinocarboxamide synthase (234 aa).

The protein belongs to the SAICAR synthetase family.

The catalysed reaction is 5-amino-1-(5-phospho-D-ribosyl)imidazole-4-carboxylate + L-aspartate + ATP = (2S)-2-[5-amino-1-(5-phospho-beta-D-ribosyl)imidazole-4-carboxamido]succinate + ADP + phosphate + 2 H(+). The protein operates within purine metabolism; IMP biosynthesis via de novo pathway; 5-amino-1-(5-phospho-D-ribosyl)imidazole-4-carboxamide from 5-amino-1-(5-phospho-D-ribosyl)imidazole-4-carboxylate: step 1/2. This Clostridium botulinum (strain Langeland / NCTC 10281 / Type F) protein is Phosphoribosylaminoimidazole-succinocarboxamide synthase.